A 547-amino-acid chain; its full sequence is Glucose-6-phosphate isomerase 1 (547 aa).

E353 acts as the Proton donor in catalysis. Residues H384 and K512 contribute to the active site.

It belongs to the GPI family.

It localises to the cytoplasm. It carries out the reaction alpha-D-glucose 6-phosphate = beta-D-fructose 6-phosphate. It participates in carbohydrate biosynthesis; gluconeogenesis. It functions in the pathway carbohydrate degradation; glycolysis; D-glyceraldehyde 3-phosphate and glycerone phosphate from D-glucose: step 2/4. In terms of biological role, catalyzes the reversible isomerization of glucose-6-phosphate to fructose-6-phosphate. The polypeptide is Glucose-6-phosphate isomerase 1 (Chromobacterium violaceum (strain ATCC 12472 / DSM 30191 / JCM 1249 / CCUG 213 / NBRC 12614 / NCIMB 9131 / NCTC 9757 / MK)).